A 312-amino-acid chain; its full sequence is MHSFKLLLALIVAICTSCDAVPRGSLSDESNFKSYPVAQYEAANHRLLRAKDGKVRADEERLSSNPDSMLTRIKSFVNPGPFHELVRTATAIAERLKETVHSTLDHWLTIQRFNHLLGHCDHDSMDSAIVRGFHPSEFRVWLDLKSPLATEVVDSLDEWPKSTQLQSLLKFIKHYHSLLLPPPNHWAKVRASINPSHASSKPLFHDVYGIKEALEEMDHIIDQDLSVATMLEQKVSPLLYKVALEARELKTGKRIDRSKLNRFIKGYMAQYPSLDKFESMVNGYAPPGKFRKIPTFKGLDDDVINPPKYLNP.

The first 20 residues, 1–20, serve as a signal peptide directing secretion; that stretch reads MHSFKLLLALIVAICTSCDA. A RxLR-dEER motif is present at residues 46–61; it reads RLLRAKDGKVRADEER.

It belongs to the RxLR effector family.

It is found in the secreted. The protein resides in the host nucleus. Functionally, secreted effector that completely suppresses the host cell death induced by cell death-inducing proteins. The chain is Secreted RxLR effector protein 14 from Plasmopara viticola (Downy mildew of grapevine).